The sequence spans 317 residues: Ribosomal protein L11 methyltransferase (317 aa).

Residues threonine 158, glycine 179, aspartate 201, and asparagine 244 each contribute to the S-adenosyl-L-methionine site.

Belongs to the methyltransferase superfamily. PrmA family.

It localises to the cytoplasm. The enzyme catalyses L-lysyl-[protein] + 3 S-adenosyl-L-methionine = N(6),N(6),N(6)-trimethyl-L-lysyl-[protein] + 3 S-adenosyl-L-homocysteine + 3 H(+). Its function is as follows. Methylates ribosomal protein L11. The chain is Ribosomal protein L11 methyltransferase from Streptococcus agalactiae serotype Ia (strain ATCC 27591 / A909 / CDC SS700).